A 429-amino-acid polypeptide reads, in one-letter code: Cell cycle protein kinase spo4 (429 aa).

The Protein kinase domain occupies 40–402 (YHVVKLVGAG…KAKTALQHEF (363 aa)). ATP is bound by residues 46–54 (VGAGSFSSV) and Lys95. Asp182 functions as the Proton acceptor in the catalytic mechanism. Residue Thr264 is modified to Phosphothreonine.

This sequence belongs to the protein kinase superfamily. Ser/Thr protein kinase family. CDC7 subfamily. Interacts with spo6.

The protein resides in the nucleus. It carries out the reaction L-seryl-[protein] + ATP = O-phospho-L-seryl-[protein] + ADP + H(+). It catalyses the reaction L-threonyl-[protein] + ATP = O-phospho-L-threonyl-[protein] + ADP + H(+). Functionally, required for the initiation of meiosis II and progression through anaphase II. This chain is Cell cycle protein kinase spo4 (spo4), found in Schizosaccharomyces pombe (strain 972 / ATCC 24843) (Fission yeast).